Consider the following 162-residue polypeptide: Protein-export protein SecB (162 aa).

The protein belongs to the SecB family. Homotetramer, a dimer of dimers. One homotetramer interacts with 1 SecA dimer.

It localises to the cytoplasm. Its function is as follows. One of the proteins required for the normal export of preproteins out of the cell cytoplasm. It is a molecular chaperone that binds to a subset of precursor proteins, maintaining them in a translocation-competent state. It also specifically binds to its receptor SecA. This is Protein-export protein SecB from Pseudomonas syringae pv. syringae (strain B728a).